A 106-amino-acid polypeptide reads, in one-letter code: Large ribosomal subunit protein uL23 (106 aa).

It belongs to the universal ribosomal protein uL23 family. As to quaternary structure, part of the 50S ribosomal subunit. Contacts protein L29, and trigger factor when it is bound to the ribosome.

One of the early assembly proteins it binds 23S rRNA. One of the proteins that surrounds the polypeptide exit tunnel on the outside of the ribosome. Forms the main docking site for trigger factor binding to the ribosome. The polypeptide is Large ribosomal subunit protein uL23 (Acinetobacter baumannii (strain SDF)).